Here is a 177-residue protein sequence, read N- to C-terminus: Disulfide bond formation protein B (177 aa).

Residues 1 to 14 (MLALLKQFSEKRFV) lie on the Cytoplasmic side of the membrane. A helical transmembrane segment spans residues 15–31 (WFLLAFSSLALESTALY). Over 32–49 (FQYGMGLQPCVLCVYERL) the chain is Periplasmic. Cys41 and Cys44 are joined by a disulfide. A helical membrane pass occupies residues 50-65 (AMIGLFVAGIIALLQP). Residues 66–72 (LAFILRL) lie on the Cytoplasmic side of the membrane. The helical transmembrane segment at 73–90 (IALALGLFSSIKGLLISF) threads the bilayer. Over 91–145 (RHLDLQMNPAPWKQCEFIPNFPETLPFHQWFPFIFNPTGSCNESQWSLFGLTMVQ) the chain is Periplasmic. The cysteines at positions 105 and 131 are disulfide-linked. The helical transmembrane segment at 146–164 (WLVVIFSLYVVILTLLLIA) threads the bilayer. Topologically, residues 165-177 (QVIKTRKQRRLFN) are cytoplasmic.

The protein belongs to the DsbB family.

The protein localises to the cell inner membrane. In terms of biological role, required for disulfide bond formation in some periplasmic proteins. Acts by oxidizing the DsbA protein. The chain is Disulfide bond formation protein B from Haemophilus influenzae (strain 86-028NP).